Consider the following 842-residue polypeptide: MutS protein homolog him-14 (842 aa).

The disordered stretch occupies residues 1–21; sequence MYSNKSFQRRQRQQVAESRSE. 588–595 contributes to the ATP binding site; the sequence is GPNMAGKS.

This sequence belongs to the DNA mismatch repair MutS family. As to quaternary structure, heterooligomer of him-14 and msh-5.

Its subcellular location is the nucleus. Functionally, required during the pachytene stage of meiotic prophase for the formation of crossovers between homologous chromosomes. Together with msh-5 and zhp-3 plays a role in the activation of DNA damage-dependent apoptosis at the DNA damage checkpoint in pachytene cells. Not needed for pairing or synapsis. May promote crossing over by interfering with Holliday junction branch migration. Has no apparent role in DNA mismatch repair. This is MutS protein homolog him-14 from Caenorhabditis elegans.